The chain runs to 795 residues: Phenylalanine--tRNA ligase beta subunit (795 aa).

The 110-residue stretch at 39-148 (AGAFHGVVVG…ADAPIGTDIR (110 aa)) folds into the tRNA-binding domain. A B5 domain is found at 401 to 476 (PTRATITLRR…RIYGYNNIPN (76 aa)). Residues Asp-454, Asp-460, Glu-463, and Glu-464 each contribute to the Mg(2+) site. One can recognise an FDX-ACB domain in the interval 701–794 (SRFPANRRDI…LKQRFQASLR (94 aa)).

The protein belongs to the phenylalanyl-tRNA synthetase beta subunit family. Type 1 subfamily. Tetramer of two alpha and two beta subunits. It depends on Mg(2+) as a cofactor.

It localises to the cytoplasm. It catalyses the reaction tRNA(Phe) + L-phenylalanine + ATP = L-phenylalanyl-tRNA(Phe) + AMP + diphosphate + H(+). In Pectobacterium atrosepticum (strain SCRI 1043 / ATCC BAA-672) (Erwinia carotovora subsp. atroseptica), this protein is Phenylalanine--tRNA ligase beta subunit.